Reading from the N-terminus, the 407-residue chain is Phosphopentomutase (407 aa).

Positions 10, 306, 311, 347, 348, and 359 each coordinate Mn(2+).

The protein belongs to the phosphopentomutase family. Requires Mn(2+) as cofactor.

Its subcellular location is the cytoplasm. The catalysed reaction is 2-deoxy-alpha-D-ribose 1-phosphate = 2-deoxy-D-ribose 5-phosphate. It carries out the reaction alpha-D-ribose 1-phosphate = D-ribose 5-phosphate. Its pathway is carbohydrate degradation; 2-deoxy-D-ribose 1-phosphate degradation; D-glyceraldehyde 3-phosphate and acetaldehyde from 2-deoxy-alpha-D-ribose 1-phosphate: step 1/2. Isomerase that catalyzes the conversion of deoxy-ribose 1-phosphate (dRib-1-P) and ribose 1-phosphate (Rib-1-P) to deoxy-ribose 5-phosphate (dRib-5-P) and ribose 5-phosphate (Rib-5-P), respectively. The chain is Phosphopentomutase from Enterobacter sp. (strain 638).